The sequence spans 538 residues: Putative cysteine ligase BshC (538 aa).

Residues 462-533 (LDHLEKRLLK…DPLESNFKIL (72 aa)) adopt a coiled-coil conformation.

This sequence belongs to the BshC family.

The chain is Putative cysteine ligase BshC from Christiangramia forsetii (strain DSM 17595 / CGMCC 1.15422 / KT0803) (Gramella forsetii).